A 109-amino-acid chain; its full sequence is Large ribosomal subunit protein uL22 (109 aa).

It belongs to the universal ribosomal protein uL22 family. Part of the 50S ribosomal subunit.

Functionally, this protein binds specifically to 23S rRNA; its binding is stimulated by other ribosomal proteins, e.g. L4, L17, and L20. It is important during the early stages of 50S assembly. It makes multiple contacts with different domains of the 23S rRNA in the assembled 50S subunit and ribosome. Its function is as follows. The globular domain of the protein is located near the polypeptide exit tunnel on the outside of the subunit, while an extended beta-hairpin is found that lines the wall of the exit tunnel in the center of the 70S ribosome. This is Large ribosomal subunit protein uL22 from Bordetella petrii (strain ATCC BAA-461 / DSM 12804 / CCUG 43448).